Here is a 333-residue protein sequence, read N- to C-terminus: D-fructose 1,6-bisphosphatase class 2/sedoheptulose 1,7-bisphosphatase (333 aa).

Asp33, Glu57, Asp85, and Glu88 together coordinate Mn(2+). Substrate contacts are provided by residues 88–90 (EGT), Tyr119, 164–166 (RTR), and 186–188 (DGD). Residue Glu213 participates in Mn(2+) binding.

Belongs to the FBPase class 2 family. In terms of assembly, homotetramer. Requires Mn(2+) as cofactor.

It catalyses the reaction beta-D-fructose 1,6-bisphosphate + H2O = beta-D-fructose 6-phosphate + phosphate. The catalysed reaction is D-sedoheptulose 1,7-bisphosphate + H2O = D-sedoheptulose 7-phosphate + phosphate. Its pathway is carbohydrate biosynthesis; Calvin cycle. Its function is as follows. Catalyzes the hydrolysis of fructose 1,6-bisphosphate (Fru 1,6-P2) and sedoheptulose 1,7-bisphosphate (Sed 1,7-P2) to fructose 6-phosphate and sedoheptulose 7-phosphate, respectively. This chain is D-fructose 1,6-bisphosphatase class 2/sedoheptulose 1,7-bisphosphatase, found in Prochlorococcus marinus (strain MIT 9312).